Here is a 391-residue protein sequence, read N- to C-terminus: Polyisoprenyl-teichoic acid--peptidoglycan teichoic acid transferase TagV (391 aa).

Residues 1 to 23 (MAERVRVRVRKKKKSKRRKILKR) are Cytoplasmic-facing. Residues 24–44 (IMLLFALALLVVVGLGGYKLY) form a helical; Signal-anchor for type II membrane protein membrane-spanning segment. At 45–391 (KTINAADESY…TTNSTTDSSY (347 aa)) the chain is on the extracellular side. The disordered stretch occupies residues 329 to 391 (DYTPDTSTGT…TTNSTTDSSY (63 aa)). A compositionally biased stretch (low complexity) spans 333–391 (DTSTGTSGTEDGTDSSSSSGSTGSTGTTTDGTTNGSSYSNDSSTSSNNSTTNSTTDSSY).

The protein belongs to the LytR/CpsA/Psr (LCP) family.

It localises to the cell membrane. It functions in the pathway cell wall biogenesis. Functionally, may catalyze the final step in cell wall teichoic acid biosynthesis, the transfer of the anionic cell wall polymers (APs) from their lipid-linked precursor to the cell wall peptidoglycan (PG). In Bacillus subtilis (strain 168), this protein is Polyisoprenyl-teichoic acid--peptidoglycan teichoic acid transferase TagV.